A 699-amino-acid chain; its full sequence is Elongation factor G (699 aa).

A tr-type G domain is found at 8–283 (EHIRNIGICA…AVVDFLPSPI (276 aa)). Residues 17–24 (AHIDAGKT), 81–85 (DTPGH), and 135–138 (NKMD) each bind GTP.

Belongs to the TRAFAC class translation factor GTPase superfamily. Classic translation factor GTPase family. EF-G/EF-2 subfamily.

The protein resides in the cytoplasm. In terms of biological role, catalyzes the GTP-dependent ribosomal translocation step during translation elongation. During this step, the ribosome changes from the pre-translocational (PRE) to the post-translocational (POST) state as the newly formed A-site-bound peptidyl-tRNA and P-site-bound deacylated tRNA move to the P and E sites, respectively. Catalyzes the coordinated movement of the two tRNA molecules, the mRNA and conformational changes in the ribosome. This is Elongation factor G from Rickettsia rickettsii (strain Iowa).